A 448-amino-acid chain; its full sequence is Tubulin beta-1 chain (448 aa).

8 residues coordinate GTP: Gln11, Glu72, Ser141, Gly145, Thr146, Gly147, Asn207, and Asn229. Glu72 is a binding site for Mg(2+). A disordered region spans residues 424 to 448 (QQYQDAGMDDDEAEEAYEEEEPVEE). Residues 430–448 (GMDDDEAEEAYEEEEPVEE) show a composition bias toward acidic residues.

It belongs to the tubulin family. As to quaternary structure, dimer of alpha and beta chains. A typical microtubule is a hollow water-filled tube with an outer diameter of 25 nm and an inner diameter of 15 nM. Alpha-beta heterodimers associate head-to-tail to form protofilaments running lengthwise along the microtubule wall with the beta-tubulin subunit facing the microtubule plus end conferring a structural polarity. Microtubules usually have 13 protofilaments but different protofilament numbers can be found in some organisms and specialized cells. Requires Mg(2+) as cofactor.

Its subcellular location is the cytoplasm. It localises to the cytoskeleton. In terms of biological role, tubulin is the major constituent of microtubules, a cylinder consisting of laterally associated linear protofilaments composed of alpha- and beta-tubulin heterodimers. Microtubules grow by the addition of GTP-tubulin dimers to the microtubule end, where a stabilizing cap forms. Below the cap, tubulin dimers are in GDP-bound state, owing to GTPase activity of alpha-tubulin. The sequence is that of Tubulin beta-1 chain (TUB1) from Colletotrichum gloeosporioides (Anthracnose fungus).